Here is a 244-residue protein sequence, read N- to C-terminus: tRNA pseudouridine synthase A (244 aa).

Asp52 serves as the catalytic Nucleophile. Substrate is bound at residue Tyr110.

The protein belongs to the tRNA pseudouridine synthase TruA family. In terms of assembly, homodimer.

It carries out the reaction uridine(38/39/40) in tRNA = pseudouridine(38/39/40) in tRNA. Its function is as follows. Formation of pseudouridine at positions 38, 39 and 40 in the anticodon stem and loop of transfer RNAs. The sequence is that of tRNA pseudouridine synthase A from Geotalea daltonii (strain DSM 22248 / JCM 15807 / FRC-32) (Geobacter daltonii).